The primary structure comprises 251 residues: NADPH-dependent oxidoreductase (251 aa).

This sequence belongs to the flavin oxidoreductase frp family. FMN serves as cofactor.

Reduces FMN, organic nitro compounds and disulfide DTNB. Involved in maintenance of the cellular redox state and the disulfide stress response. The chain is NADPH-dependent oxidoreductase (nfrA) from Staphylococcus aureus (strain MSSA476).